The chain runs to 683 residues: Methionine--tRNA ligase (683 aa).

Positions 15-25 (PYANGPIHLGH) match the 'HIGH' region motif. 4 residues coordinate Zn(2+): Cys-146, Cys-149, Cys-159, and Cys-162. The short motif at 332 to 336 (KMSKS) is the 'KMSKS' region element. An ATP-binding site is contributed by Lys-335. The 102-residue stretch at 582 to 683 (DFAKIDLRIA…EGALPGMRVK (102 aa)) folds into the tRNA-binding domain.

This sequence belongs to the class-I aminoacyl-tRNA synthetase family. MetG type 1 subfamily. As to quaternary structure, homodimer. It depends on Zn(2+) as a cofactor.

The protein resides in the cytoplasm. It catalyses the reaction tRNA(Met) + L-methionine + ATP = L-methionyl-tRNA(Met) + AMP + diphosphate. Its function is as follows. Is required not only for elongation of protein synthesis but also for the initiation of all mRNA translation through initiator tRNA(fMet) aminoacylation. The polypeptide is Methionine--tRNA ligase (Shewanella frigidimarina (strain NCIMB 400)).